The primary structure comprises 239 residues: tRNA (guanine-N(7)-)-methyltransferase (239 aa).

S-adenosyl-L-methionine is bound by residues E69, E94, D121, and D144. Residue D144 is part of the active site. K148 contributes to the substrate binding site. The segment at 150–155 (RHNKRR) is interaction with RNA. Substrate is bound by residues D180 and 217-220 (TKFE).

This sequence belongs to the class I-like SAM-binding methyltransferase superfamily. TrmB family. In terms of assembly, monomer.

It catalyses the reaction guanosine(46) in tRNA + S-adenosyl-L-methionine = N(7)-methylguanosine(46) in tRNA + S-adenosyl-L-homocysteine. It participates in tRNA modification; N(7)-methylguanine-tRNA biosynthesis. Functionally, catalyzes the formation of N(7)-methylguanine at position 46 (m7G46) in tRNA. This is tRNA (guanine-N(7)-)-methyltransferase from Salmonella typhi.